A 273-amino-acid polypeptide reads, in one-letter code: Large ribosomal subunit protein uL2 (273 aa).

Disordered stretches follow at residues 34-54 and 223-273; these read LEKKSKSGGRNNNGRITTRHI and VAMN…RRRK.

This sequence belongs to the universal ribosomal protein uL2 family. As to quaternary structure, part of the 50S ribosomal subunit. Forms a bridge to the 30S subunit in the 70S ribosome.

In terms of biological role, one of the primary rRNA binding proteins. Required for association of the 30S and 50S subunits to form the 70S ribosome, for tRNA binding and peptide bond formation. It has been suggested to have peptidyltransferase activity; this is somewhat controversial. Makes several contacts with the 16S rRNA in the 70S ribosome. The chain is Large ribosomal subunit protein uL2 from Azotobacter vinelandii (strain DJ / ATCC BAA-1303).